The following is a 975-amino-acid chain: MLQPRESDVPVLFVVFIVLPVIAYFLLGRWHDAVSKKARVSVLAQRAAEETFKVETMATPDVILPGPSLRPMPYMRSAPSARPEYHECATCHGPAKTRCSRCKSVRYCSGKCQIIHWRQGHKQTCQQWNGFGTSSSGGLPPTENTEQMPFLSNLNSPLRGSDVHLHDMDFDTMSEPSFVTTDSYNLDTSPFLSDRSNMNKPNQFLHTSENGAAIGSYEKNDYSIDGEVPSSEILSGNKGLNNSSGSGENCGNRDVIYPLNSVVHQPNNYAPEIRKRPKASITVYESDKGVYLTSDMISSGEGPYASAAESLQRSNSSGNVTGKGNMIHKKPPYPSGKVSSSQKSQEKVLTSHQYDGHEKNPHNKNEQRSTKTAVSTNSSLQGCNGISKAGASKVEALKKPSKFLKTSLVGLINDNKRSKVLFPYEDLVKFFQYEVRGISPRGLFNCGNSCYANAVLQCLMCTKPLMIYLLLRLHSKDCCSKNWCLMCELEQYASTLRESGGPVSPSRILSNLRNIGCRLGGGSQEDAHEFLRHLVMSMQGACLDGLGGEKQVEASLQETTLIQQMFGGRLKSKVKCLRCYHESERYENIMDLTLEIHGWVESLQDALTQFTAPEDLDGENMYKCGRCSAYVKARKQLSVHEVPNILTVVLKRFQTGKYGKINKCVTFPDMLDMVPFVTGAGDNPPLYFLYAVVVHVDTENASFSGHYISYVKDMQGTWLRIDDSEVQAVSLNQVMSEGAYMLFYMRSFPRPPKIYIEKGLSSVPTCSKRHSSKSSKGSKQDLNHTESLFASSDQTYGIYDFRPDNGYIQDQHAALRTRNFYHTDDAFADSISTDFSDATSSEWSLFTSSDESSFTTESTRDSFSVVDYGDNAGLDPISSIFGPYYAQDHPPGSFASCTRLSPSNPQTRYFQENTGFVSDSSMPAHLPGNVHRGRYPDRACSSSAEPPASANPRSVYGRYGLSREGFVQTSGFCQM.

Residues Cys-88, Cys-91, Cys-99, Cys-102, Cys-108, Cys-112, His-121, and Cys-125 each coordinate Zn(2+). The segment at 88–125 (CATCHGPAKTRCSRCKSVRYCSGKCQIIHWRQGHKQTC) adopts an MYND-type zinc-finger fold. A disordered region spans residues 301–378 (EGPYASAAES…STKTAVSTNS (78 aa)). Residues 309 to 322 (ESLQRSNSSGNVTG) show a composition bias toward polar residues. Residues 354–369 (YDGHEKNPHNKNEQRS) are compositionally biased toward basic and acidic residues. Positions 441–747 (RGLFNCGNSC…GAYMLFYMRS (307 aa)) constitute a USP domain. The Nucleophile role is filled by Cys-450. His-706 acts as the Proton acceptor in catalysis. The disordered stretch occupies residues 764-783 (PTCSKRHSSKSSKGSKQDLN).

The protein belongs to the peptidase C19 family. As to expression, highly expressed in young panicles. Expressed in roots, leaf blades, leaf sheaths and stems. Expressed at low levels in brown grains.

It is found in the cytoplasm. Its subcellular location is the nucleus. The catalysed reaction is Thiol-dependent hydrolysis of ester, thioester, amide, peptide and isopeptide bonds formed by the C-terminal Gly of ubiquitin (a 76-residue protein attached to proteins as an intracellular targeting signal).. Functionally, recognizes and hydrolyzes the peptide bond at the C-terminal Gly of ubiquitin. Involved in the processing of poly-ubiquitin precursors as well as that of ubiquitinated proteins. Involved in the regulation of grain size. Acts as positive regulator of grain width and size by influencing cell proliferation. Functions partially antagonistically with GW2 in the regulation of grain width. Possesses deubiquitinating enzyme activity in vitro. The polypeptide is Ubiquitin C-terminal hydrolase 15 (Oryza sativa subsp. japonica (Rice)).